A 229-amino-acid polypeptide reads, in one-letter code: Large ribosomal subunit protein uL1 (229 aa).

It belongs to the universal ribosomal protein uL1 family. Part of the 50S ribosomal subunit.

Its function is as follows. Binds directly to 23S rRNA. The L1 stalk is quite mobile in the ribosome, and is involved in E site tRNA release. Protein L1 is also a translational repressor protein, it controls the translation of the L11 operon by binding to its mRNA. The polypeptide is Large ribosomal subunit protein uL1 (Streptococcus pneumoniae serotype 2 (strain D39 / NCTC 7466)).